A 252-amino-acid polypeptide reads, in one-letter code: C4b-binding protein beta chain (252 aa).

A signal peptide spans 1-17 (MFFWCACCLMVAWRVSA). 3 Sushi domains span residues 21 to 78 (EHCP…ECRL), 79 to 136 (GHCP…ICKS), and 137 to 193 (RDCD…VCKL). Intrachain disulfides connect cysteine 23–cysteine 63, cysteine 49–cysteine 76, cysteine 81–cysteine 121, cysteine 107–cysteine 134, cysteine 139–cysteine 179, and cysteine 165–cysteine 191. N-linked (GlcNAc...) asparagine glycosylation is found at asparagine 64, asparagine 71, asparagine 98, asparagine 117, and asparagine 154.

As to quaternary structure, disulfide-linked complex of alpha and beta chains of 3 possible sorts: a 570 kDa complex of 7 alpha chains and 1 beta chain, a 530 kDa homoheptamer of alpha chains or a 500 kDa complex of 6 alpha chains and 1 beta chain. The central body of the alpha chain homomer supports tentacles, each with the binding site for C4b at the end.

Its subcellular location is the secreted. In terms of biological role, controls the classical pathway of complement activation. It binds as a cofactor to C3b/C4b inactivator (C3bINA), which then hydrolyzes the complement fragment C4b. It also accelerates the degradation of the C4bC2a complex (C3 convertase) by dissociating the complement fragment C2a. It also interacts with anticoagulant protein S and with serum amyloid P component. The beta chain binds protein S. The polypeptide is C4b-binding protein beta chain (C4BPB) (Homo sapiens (Human)).